A 332-amino-acid polypeptide reads, in one-letter code: HPr kinase/phosphorylase (332 aa).

Residues histidine 153 and lysine 174 contribute to the active site. ATP is bound at residue 168 to 175 (GKSGLGKS). Mg(2+) is bound at residue serine 175. The active-site Proton acceptor; for phosphorylation activity. Proton donor; for dephosphorylation activity is aspartate 192. Residues 217–226 (MEIRGLGVVD) are important for the catalytic mechanism of both phosphorylation and dephosphorylation. Glutamate 218 contacts Mg(2+). Arginine 259 is a catalytic residue. The segment at 280–285 (PIFPGK) is important for the catalytic mechanism of dephosphorylation.

It belongs to the HPrK/P family. In terms of assembly, homohexamer. Mg(2+) is required as a cofactor.

It catalyses the reaction [HPr protein]-L-serine + ATP = [HPr protein]-O-phospho-L-serine + ADP + H(+). The catalysed reaction is [HPr protein]-O-phospho-L-serine + phosphate + H(+) = [HPr protein]-L-serine + diphosphate. Catalyzes the ATP- as well as the pyrophosphate-dependent phosphorylation of a specific serine residue in HPr, a phosphocarrier protein of the phosphoenolpyruvate-dependent sugar phosphotransferase system (PTS). HprK/P also catalyzes the pyrophosphate-producing, inorganic phosphate-dependent dephosphorylation (phosphorolysis) of seryl-phosphorylated HPr (P-Ser-HPr). The sequence is that of HPr kinase/phosphorylase from Chlorobium luteolum (strain DSM 273 / BCRC 81028 / 2530) (Pelodictyon luteolum).